The primary structure comprises 243 residues: Triosephosphate isomerase (243 aa).

Position 9–11 (9–11) interacts with substrate; sequence NWK. Catalysis depends on H96, which acts as the Electrophile. E165 functions as the Proton acceptor in the catalytic mechanism. Residues G171, S204, and 225–226 each bind substrate; that span reads GG.

Belongs to the triosephosphate isomerase family. Homodimer.

The protein localises to the cytoplasm. The enzyme catalyses D-glyceraldehyde 3-phosphate = dihydroxyacetone phosphate. Its pathway is carbohydrate biosynthesis; gluconeogenesis. It participates in carbohydrate degradation; glycolysis; D-glyceraldehyde 3-phosphate from glycerone phosphate: step 1/1. Functionally, involved in the gluconeogenesis. Catalyzes stereospecifically the conversion of dihydroxyacetone phosphate (DHAP) to D-glyceraldehyde-3-phosphate (G3P). In Synechococcus sp. (strain WH7803), this protein is Triosephosphate isomerase.